The chain runs to 512 residues: Methionine--tRNA ligase (512 aa).

The 'HIGH' region signature appears at 12 to 22 (YYVNDVPHIGH). The short motif at 295–299 (KISKS) is the 'KMSKS' region element. Lys298 is an ATP binding site.

Belongs to the class-I aminoacyl-tRNA synthetase family. MetG type 2B subfamily. As to quaternary structure, monomer.

The protein resides in the cytoplasm. It catalyses the reaction tRNA(Met) + L-methionine + ATP = L-methionyl-tRNA(Met) + AMP + diphosphate. In terms of biological role, is required not only for elongation of protein synthesis but also for the initiation of all mRNA translation through initiator tRNA(fMet) aminoacylation. The chain is Methionine--tRNA ligase from Rickettsia felis (strain ATCC VR-1525 / URRWXCal2) (Rickettsia azadi).